Here is a 470-residue protein sequence, read N- to C-terminus: Tryptophan synthase beta chain 1, chloroplastic (470 aa).

Residues 1–10 (MAASGTSATF) are compositionally biased toward polar residues. Positions 1 to 24 (MAASGTSATFRASVSSAPSSSSQL) are disordered. Positions 12–22 (ASVSSAPSSSS) are enriched in low complexity. N6-(pyridoxal phosphate)lysine is present on Lys-165.

Belongs to the TrpB family. In terms of assembly, tetramer of two alpha and two beta chains. Pyridoxal 5'-phosphate serves as cofactor.

It localises to the plastid. The protein resides in the chloroplast. The enzyme catalyses (1S,2R)-1-C-(indol-3-yl)glycerol 3-phosphate + L-serine = D-glyceraldehyde 3-phosphate + L-tryptophan + H2O. It participates in amino-acid biosynthesis; L-tryptophan biosynthesis; L-tryptophan from chorismate: step 5/5. Its function is as follows. The beta subunit is responsible for the synthesis of L-tryptophan from indole and L-serine. The sequence is that of Tryptophan synthase beta chain 1, chloroplastic (TSB1) from Arabidopsis thaliana (Mouse-ear cress).